Reading from the N-terminus, the 872-residue chain is Armadillo repeat-containing protein 3 (872 aa).

ARM repeat units lie at residues 15 to 54 (DVFD…KFAL), 57 to 96 (EENK…ILAS), 98 to 138 (NDVK…NMSA), 140 to 179 (YTSK…NLVQ), 181 to 220 (FQCR…VIAN), 222 to 262 (KESR…NCLE), 264 to 304 (MDTM…KAAY), 306 to 345 (PENR…AMCE), 346 to 385 (NSGS…NLTT), 388 to 427 (PANA…NMAM), 429 to 468 (EPLR…ATAC), and 470 to 509 (VEAR…VCAG). Residues Cys-507 and Cys-518 are each lipidated (S-palmitoyl cysteine). The segment at 610–693 (VSPPSSMEDK…SKGKKEEEKV (84 aa)) is disordered. Low complexity predominate over residues 626–635 (RSISSSSSLR). A compositionally biased stretch (basic residues) spans 636-646 (RSSKEKNKKNS). Basic and acidic residues predominate over residues 675–693 (ATKEKGWRKSKGKKEEEKV).

As to quaternary structure, homodimer. Interacts with PIK3C3, PIK3R4 and BECN1. Interacts (via ARM domains) with ATG14. Post-translationally, palmitoylation is important for its function in autophagy. Expressed in skeletal muscle, brain, lung, kidney, prostate and testis. As to expression, mainly expressed in skeletal muscle, liver, spleen and thymus. In terms of tissue distribution, expressed only in the testis among normal tissues but is expressed frequently in various cancer tissues and, particularly, in pancreatic, lung and endometrial cancers.

Functionally, essential for male fertility and sperm motility. During spermatogenesis, promotes the autophagic degradation of excessive ribosomes, providing energy resources for mitochondria and thus ensuring sperm flagellar motility. This Homo sapiens (Human) protein is Armadillo repeat-containing protein 3 (ARMC3).